A 226-amino-acid polypeptide reads, in one-letter code: PKHD-type hydroxylase PiuC (226 aa).

A Fe2OG dioxygenase domain is found at 78–178 (KVFPPLFNCY…RYASFFWTQS (101 aa)). Positions 96, 98, and 159 each coordinate Fe cation. R169 contributes to the 2-oxoglutarate binding site.

Fe(2+) is required as a cofactor. L-ascorbate serves as cofactor.

This is PKHD-type hydroxylase PiuC (piuC) from Pseudomonas aeruginosa (strain ATCC 15692 / DSM 22644 / CIP 104116 / JCM 14847 / LMG 12228 / 1C / PRS 101 / PAO1).